Consider the following 274-residue polypeptide: Dermonecrotic toxin SdSicTox-betaIIB1bx (274 aa).

Residue histidine 5 is part of the active site. Mg(2+)-binding residues include glutamate 25 and aspartate 27. The Nucleophile role is filled by histidine 41. 2 cysteine pairs are disulfide-bonded: cysteine 45–cysteine 51 and cysteine 47–cysteine 190. Aspartate 85 lines the Mg(2+) pocket.

The protein belongs to the arthropod phospholipase D family. Class II subfamily. Mg(2+) is required as a cofactor. In terms of tissue distribution, expressed by the venom gland.

Its subcellular location is the secreted. It carries out the reaction an N-(acyl)-sphingosylphosphocholine = an N-(acyl)-sphingosyl-1,3-cyclic phosphate + choline. The catalysed reaction is an N-(acyl)-sphingosylphosphoethanolamine = an N-(acyl)-sphingosyl-1,3-cyclic phosphate + ethanolamine. It catalyses the reaction a 1-acyl-sn-glycero-3-phosphocholine = a 1-acyl-sn-glycero-2,3-cyclic phosphate + choline. The enzyme catalyses a 1-acyl-sn-glycero-3-phosphoethanolamine = a 1-acyl-sn-glycero-2,3-cyclic phosphate + ethanolamine. Functionally, dermonecrotic toxins cleave the phosphodiester linkage between the phosphate and headgroup of certain phospholipids (sphingolipid and lysolipid substrates), forming an alcohol (often choline) and a cyclic phosphate. This toxin acts on sphingomyelin (SM). It may also act on ceramide phosphoethanolamine (CPE), lysophosphatidylcholine (LPC) and lysophosphatidylethanolamine (LPE), but not on lysophosphatidylserine (LPS), and lysophosphatidylglycerol (LPG). It acts by transphosphatidylation, releasing exclusively cyclic phosphate products as second products. Induces dermonecrosis, hemolysis, increased vascular permeability, edema, inflammatory response, and platelet aggregation. In Sicarius cf. damarensis (strain GJB-2008) (Six-eyed sand spider), this protein is Dermonecrotic toxin SdSicTox-betaIIB1bx.